The sequence spans 590 residues: Cyclin-dependent kinase-like 3 (590 aa).

A Protein kinase domain is found at 4–286; it reads YETLGKVGEG…SSDLLHHEYF (283 aa). ATP contacts are provided by residues 10–18 and Lys33; that span reads VGEGSYGTV. The short motif at 45 to 51 is the [NKR]KIAxRE element; it reads KIAMREI. The active-site Proton acceptor is Asp125. At Thr158 the chain carries Phosphothreonine. Tyr160 is subject to Phosphotyrosine. Disordered stretches follow at residues 459–508 and 547–590; these read RAKK…SNEN and LKRE…PDVE. The segment covering 466–477 has biased composition (polar residues); it reads SSQSIGQVMPNS. Basic and acidic residues-rich tracts occupy residues 547-556 and 580-590; these read LKRESKKTDS and TERKKNLPDVE.

Belongs to the protein kinase superfamily. CMGC Ser/Thr protein kinase family. CDC2/CDKX subfamily.

It localises to the cytoplasm. It catalyses the reaction L-seryl-[protein] + ATP = O-phospho-L-seryl-[protein] + ADP + H(+). The enzyme catalyses L-threonyl-[protein] + ATP = O-phospho-L-threonyl-[protein] + ADP + H(+). This Macaca fascicularis (Crab-eating macaque) protein is Cyclin-dependent kinase-like 3.